The sequence spans 116 residues: Cell cycle protein GpsB (116 aa).

Residues 32–69 are a coiled coil; sequence LDDVIKDYETYSALVKELREENSRLKQELSKRMQEAPN. Residues 57–78 are disordered; it reads KQELSKRMQEAPNSTASQVHQS. Residues 67–78 are compositionally biased toward polar residues; the sequence is APNSTASQVHQS.

This sequence belongs to the GpsB family. In terms of assembly, forms polymers through the coiled coil domains. Interacts with PBP1, MreC and EzrA.

It is found in the cytoplasm. Functionally, divisome component that associates with the complex late in its assembly, after the Z-ring is formed, and is dependent on DivIC and PBP2B for its recruitment to the divisome. Together with EzrA, is a key component of the system that regulates PBP1 localization during cell cycle progression. Its main role could be the removal of PBP1 from the cell pole after pole maturation is completed. Also contributes to the recruitment of PBP1 to the division complex. Not essential for septum formation. The chain is Cell cycle protein GpsB from Streptococcus gordonii (strain Challis / ATCC 35105 / BCRC 15272 / CH1 / DL1 / V288).